Reading from the N-terminus, the 1106-residue chain is MDGDDLIASVYRKIEREKALITAASNMRQSTDNPLVQQRVDANIRDGRKNIAYLEEKMRELQLRQMKQEGASPTDKRLPPNPDGSAPVPPPKDYAPGYSGHEREYGDASGAYPHGGAGTMPSGAPFADPRPFAPVPKARPNYTKLDLIKYDTPYLGPKIQLMLSQLEFKLSVEKQYKAGIEKMVRLYQDEGDRKSRQDAEGRRIESNQKIQLLKQALKRYEDLHVDIESAEAPDDESLSTPNLRKPLTGLLTLRIHAVEDVDHAASSRFSRGPETFVVVKVEDAIKARTKATRTDKWQDEPFNIEIDKANEIELTVYDKSGDRPTPIGMLWVRISDIAEEMRRKKIESEFNASGWVSADKMEHGAAHGRQDAGGAPGSSNRPPSGGHSGGPGQGYAGGAPGGASAGPVLIDSWFALEPVGRIHLTLSFAKQLKDRRPFDIGLNRQGAVRQKKEEVHEKQGHKFVTQQFYNIMRCALCGDFLKYAAGMQCADCKYTCHRKCYPKVVTKCISKANYETDPDEEKINHRIPHRFEGFSNISANWCCHCGYLLPFGRKSAKRCTECGLTCHAQCTHLVPDFCGMSMEAANQILETLIRAKNHNKSASVSSGLSGRTLRPGGPPQAPQDNVALAYPQKPVEGAYGAPQRQPSAEAISAATNTYIPPQSPTAAQRQHIPPRTSSSQSPAAAAAAAAAAATGLRTPQQASDPNRPVQPPPSSHAHYDPAAYASYQQAIPPQAMQKMGAPYGMPQQQQQQAVAPMQQQVAVKEEIPPQQPKVRIGLDHFNFLAVLGKGNFGKVMLAETKSTKKLYAIKVLKKEFIIENDEVESTKSEKRVFLIANKERHPFLLNLHACFQTETRVYFVMEYISGGDLMLHIQRGQFGLKRAQFYAAEVLLALKYFHENGVIYRDLKLDNILLTLDGHIKIADYGLCKENMWYGSTTSTFCGTPEFMAPEILLDKKYGRAVDWWAFGVLIYQMLLQQSPFRGEDEDEIYDAILADEPLYPIHMPRDSVSILQKLLTREPELRLGSGPTDAQEVMSHAFFRNINWDDIYHKRVPPPFLPTISSPTDTSNFDQEFTSVTPVLTPVQSVLSQAMQEEFRGFSYTADFA.

The REM-1 1 domain maps to 1–67 (MDGDDLIASV…MRELQLRQMK (67 aa)). A disordered region spans residues 65-138 (QMKQEGASPT…PRPFAPVPKA (74 aa)). A compositionally biased stretch (pro residues) spans 79–93 (PPNPDGSAPVPPPKD). The region spanning 149-226 (KYDTPYLGPK…LKRYEDLHVD (78 aa)) is the REM-1 2 domain. In terms of domain architecture, C2 spans 232–350 (APDDESLSTP…MRRKKIESEF (119 aa)). Over residues 361 to 370 (MEHGAAHGRQ) the composition is skewed to basic and acidic residues. The tract at residues 361–400 (MEHGAAHGRQDAGGAPGSSNRPPSGGHSGGPGQGYAGGAP) is disordered. Residues 386-400 (GHSGGPGQGYAGGAP) are compositionally biased toward gly residues. 2 consecutive Phorbol-ester/DAG-type zinc fingers follow at residues 460 to 508 (GHKF…VTKC) and 528 to 578 (PHRF…PDFC). Polar residues-rich tracts occupy residues 600–609 (KSASVSSGLS) and 658–668 (YIPPQSPTAAQ). Disordered stretches follow at residues 600–625 (KSAS…PQDN) and 658–719 (YIPP…HAHY). Over residues 683-693 (AAAAAAAAAAA) the composition is skewed to low complexity. Residues 781–1040 (FNFLAVLGKG…AQEVMSHAFF (260 aa)) enclose the Protein kinase domain. ATP is bound by residues 787-795 (LGKGNFGKV) and Lys810. Asp906 functions as the Proton acceptor in the catalytic mechanism. In terms of domain architecture, AGC-kinase C-terminal spans 1041–1106 (RNINWDDIYH…RGFSYTADFA (66 aa)). Thr1082 is modified (phosphothreonine). The residue at position 1100 (Ser1100) is a Phosphoserine. At Tyr1101 the chain carries Phosphotyrosine.

Belongs to the protein kinase superfamily. AGC Ser/Thr protein kinase family. PKC subfamily. As to quaternary structure, interacts with hsp90.

The catalysed reaction is L-seryl-[protein] + ATP = O-phospho-L-seryl-[protein] + ADP + H(+). It catalyses the reaction L-threonyl-[protein] + ATP = O-phospho-L-threonyl-[protein] + ADP + H(+). Its function is as follows. Protein kinase C; part of cell wall integrity (CWI) signaling pathway composed of pkcA, the bck1-mkk2-mpka MAPK cascade and the downstream rlmA transcription regulator. The CWI signaling pathway regulates cell wall integrity and pyomelanin formation. CWI also controls oxidative stress response, gliotoxin production, iron adaptation and asexual development. Finally, CWI is constitutively required for A.fumigatus to cope with the temperature increase found in the mammalian lung environment, during infection. Modulates the expression of fumiquinazoline cluster during conidiogenesis. The polypeptide is Protein kinase C (Aspergillus fumigatus (strain ATCC MYA-4609 / CBS 101355 / FGSC A1100 / Af293) (Neosartorya fumigata)).